A 37-amino-acid polypeptide reads, in one-letter code: Large ribosomal subunit protein bL36 (37 aa).

This sequence belongs to the bacterial ribosomal protein bL36 family.

In Staphylococcus carnosus (strain TM300), this protein is Large ribosomal subunit protein bL36.